The following is a 437-amino-acid chain: tRNA-2-methylthio-N(6)-dimethylallyladenosine synthase (437 aa).

The region spanning 1 to 115 (MKVYIETMGC…ISQVIHKEKA (115 aa)) is the MTTase N-terminal domain. [4Fe-4S] cluster-binding residues include cysteine 10, cysteine 46, cysteine 78, cysteine 148, cysteine 152, and cysteine 155. The Radical SAM core domain occupies 134–367 (KKAQIRSLLN…QNRHKEILEE (234 aa)). The TRAM domain maps to 370–436 (KLEVGKTHVV…KGRLMAATKG (67 aa)).

This sequence belongs to the methylthiotransferase family. MiaB subfamily. In terms of assembly, monomer. The cofactor is [4Fe-4S] cluster.

Its subcellular location is the cytoplasm. It catalyses the reaction N(6)-dimethylallyladenosine(37) in tRNA + (sulfur carrier)-SH + AH2 + 2 S-adenosyl-L-methionine = 2-methylsulfanyl-N(6)-dimethylallyladenosine(37) in tRNA + (sulfur carrier)-H + 5'-deoxyadenosine + L-methionine + A + S-adenosyl-L-homocysteine + 2 H(+). Its function is as follows. Catalyzes the methylthiolation of N6-(dimethylallyl)adenosine (i(6)A), leading to the formation of 2-methylthio-N6-(dimethylallyl)adenosine (ms(2)i(6)A) at position 37 in tRNAs that read codons beginning with uridine. The protein is tRNA-2-methylthio-N(6)-dimethylallyladenosine synthase of Helicobacter pylori (strain ATCC 700392 / 26695) (Campylobacter pylori).